A 360-amino-acid chain; its full sequence is Snurportin-1 (360 aa).

Position 1 is an N-acetylmethionine (methionine 1). A disordered region spans residues 1–42 (MEELSQALASSFSVSQDLNSTAAPHPRLSQYKSKYSSLEQSE). Positions 1-65 (MEELSQALAS…LDYVNHARRL (65 aa)) are necessary for interaction with KPNB1 and m3G-cap U1 and U5 snRNP import receptor activity. The tract at residues 1–159 (MEELSQALAS…NRFSSLLPGG (159 aa)) is necessary for interaction with XPO1. Over residues 7-22 (ALASSFSVSQDLNSTA) the composition is skewed to polar residues. One can recognise an IBB domain in the interval 11-73 (SFSVSQDLNS…RLAEDDWTGM (63 aa)). Position 75 is a phosphoserine (serine 75). Positions 127-129 (GKR) are interaction with m3G-cap structure. A necessary for binding to the m3G-cap structure region spans residues 208–328 (MHSKLPEEEG…GMKEKLTHKA (121 aa)). The segment at 339–360 (LSTPKLKGSSHSPDHPGCLMEN) is disordered. Serine 350 carries the post-translational modification Phosphoserine.

The protein belongs to the snurportin family. In terms of assembly, component of an import snRNP complex composed of KPNB1, SNUPN, SMN1 and ZNF259. Component of a nuclear export receptor complex composed of KPNB1, Ran, SNUPN and XPO1. Found in a trimeric export complex with SNUPN, Ran and XPO1. Interacts (via IBB domain) with KPNB1; the interaction is direct. Interacts with DDX20, IPO7, SMN1, SNRPB and XPO1. Interacts directly with XPO1. Its interaction with XPO1 and binding to m3G-cap U snRNPs appears to be mutually exclusive. Can form homomers.

Its subcellular location is the nucleus. It localises to the cytoplasm. In terms of biological role, functions as an U snRNP-specific nuclear import adapter. Involved in the trimethylguanosine (m3G)-cap-dependent nuclear import of U snRNPs. Binds specifically to the terminal m3G-cap U snRNAs. This chain is Snurportin-1 (SNUPN), found in Homo sapiens (Human).